Here is a 276-residue protein sequence, read N- to C-terminus: uncharacterized protein (276 aa).

One can recognise an AB hydrolase-1 domain in the interval 20-137 (PVLIFIPGAN…PPINTFLPDS (118 aa)). A disordered region spans residues 57 to 76 (GESELTEPLPDSASNPDSDY).

Belongs to the AB hydrolase superfamily.

This is an uncharacterized protein from Staphylococcus aureus (strain N315).